Consider the following 239-residue polypeptide: tRNA (guanine-N(1)-)-methyltransferase (239 aa).

Residues Gly-113 and 137–142 contribute to the S-adenosyl-L-methionine site; that span reads LGDYVL.

It belongs to the RNA methyltransferase TrmD family. In terms of assembly, homodimer.

Its subcellular location is the cytoplasm. It catalyses the reaction guanosine(37) in tRNA + S-adenosyl-L-methionine = N(1)-methylguanosine(37) in tRNA + S-adenosyl-L-homocysteine + H(+). In terms of biological role, specifically methylates guanosine-37 in various tRNAs. The chain is tRNA (guanine-N(1)-)-methyltransferase from Cutibacterium acnes (strain DSM 16379 / KPA171202) (Propionibacterium acnes).